The chain runs to 235 residues: Venom metalloproteinase antarease-like TserMP_B (235 aa).

The Peptidase M12B domain maps to 4-233; that stretch reads IVVEYYIVTD…PTASCIFQQC (230 aa). A disulfide bridge connects residues C137 and C228. H161 serves as a coordination point for Zn(2+). The active site involves E162. 2 residues coordinate Zn(2+): H165 and H171.

It belongs to the venom metalloproteinase (M12B) family. Zn(2+) serves as cofactor. Expressed by the venom gland.

The protein resides in the secreted. With respect to regulation, inhibited by EDTA. Acts as a metalloprotease. Penetrates intact tissue and specifically cleaves the vesicle-associated membrane protein 2 (VAMP2) (part of the SNARE complex) involved in pancreatic secretion, thus disrupting the normal vesicular traffic. This chain is Venom metalloproteinase antarease-like TserMP_B, found in Tityus serrulatus (Brazilian scorpion).